The primary structure comprises 362 residues: 3-dehydroquinate synthase (362 aa).

NAD(+) is bound by residues 71-76 (DGEQYK), 105-109 (GVVGD), 129-130 (TT), Lys142, Lys151, and 169-172 (CLKT). Glu184, His247, and His264 together coordinate Zn(2+).

The protein belongs to the sugar phosphate cyclases superfamily. Dehydroquinate synthase family. The cofactor is Co(2+). Zn(2+) serves as cofactor. NAD(+) is required as a cofactor.

The protein resides in the cytoplasm. The enzyme catalyses 7-phospho-2-dehydro-3-deoxy-D-arabino-heptonate = 3-dehydroquinate + phosphate. It participates in metabolic intermediate biosynthesis; chorismate biosynthesis; chorismate from D-erythrose 4-phosphate and phosphoenolpyruvate: step 2/7. Functionally, catalyzes the conversion of 3-deoxy-D-arabino-heptulosonate 7-phosphate (DAHP) to dehydroquinate (DHQ). This Escherichia coli O81 (strain ED1a) protein is 3-dehydroquinate synthase.